Here is a 292-residue protein sequence, read N- to C-terminus: RNA polymerase II transcriptional coactivator SUB1 (292 aa).

2 disordered regions span residues 1-31 and 117-292; these read MSYYNRYRNKRRSDNGGGNLSNSNNNNGGMP and LLSD…SEEE. Positions 20–31 are enriched in low complexity; that stretch reads LSNSNNNNGGMP. Ser-119 carries the post-translational modification Phosphoserine. Basic and acidic residues-rich tracts occupy residues 133–166, 179–191, 204–240, and 251–267; these read NNDKDKNGKDKNSPKKRREDKSKASNESHDLEPR, PHEENIQNAEREA, KQQEERKQKEKEEAEEAKAKAVAEQEKEAKAKEKIAE, and AKKEDIVSNINESKDAN. Phosphoserine is present on residues Ser-268, Ser-269, and Ser-289.

It belongs to the transcriptional coactivator PC4 family.

Its subcellular location is the nucleus. Its function is as follows. Plays a role in the release of TFIIB from the transcription complex during transcription initiation. Binds to TFIIB and specifically inhibits the formation of the TBP-TFIIB-promoter complexes. In Saccharomyces cerevisiae (strain ATCC 204508 / S288c) (Baker's yeast), this protein is RNA polymerase II transcriptional coactivator SUB1 (SUB1).